Here is a 1242-residue protein sequence, read N- to C-terminus: MFFNPYLSGGVTGGAVAGGRRQRSQPGSAQGSGKRPPQKQFLQIVPRGVMFDGQTGLIKHKTGRLPLMFYREIKHLLSHDMVWPCPWRETLVGRVVGPIRFHTYDQTDAVLFFDSPENVSPRYRQHLVPSGNVLRFFGATEHGYSICVNVFGQRSYFYCEYSDTDRLREVIASVGELVPEPRTPYAVSVTPATKTSIYGYGTRPVPDLQCVSISNWTMARKIGEYLLEQGFPVYEVRVDPLTRLVIDRRITTFGWCSVNRYDWRQQGRASTCDIEVDCDVSDLVAVPDDSSWPRYRCLSFDIECMSGEGGFPCAEKSDDIVIQISCVCYETGGNTAVDQGIPNGNDGRGCTSEGVIFGHSGLHLFTIGTCGQVGPDVDVYEFPSEYELLLGFMLFFQRYAPAFVTGYNINSFDLKYILTRLEYLYKVDSQRFCKLPTAQGGRFFLHSPAVGFKRQYAAAFPSASHNNPASTAATKVYIAGSVVIDMYPVCMAKTNSPNYKLNTMAELYLRQRKDDLSYKDIPRCFVANAEGRAQVGRYCLQDAVLVRDLFNTINFHYEAGAIARLAKIPLRRVIFDGQQIRIYTSLLDECACRDFILPNHYSKGTTVPETNSVAVSPNAAIISTAAVPGDAGSVAAMFQMSPPLQSAPSSQDGVSPGSGSNSSSSVGVFSVGSGSSGGVGVSNDNHGAGGTAAVSYQGATVFEPEVGYYNDPVAVFDFASLYPSIIMAHNLCYSTLLVPGGEYPVDPADVYSVTLENGVTHRFVRASVRVSVLSELLNKWVSQRRAVRECMRECQDPVRRMLLDKEQMALKVTCNAFYGFTGVVNGMMPCLPIAASITRIGRDMLERTARFIKDNFSEPCFLHNFFNQEDYVVGTREGDSEESSALPEGLETSSGGSNERRVEARVIYGDTDSVFVRFRGLTPQALVARGPSLAHYVTACLFVEPVKLEFEKVFVSLMMICKKRYIGKVEGASGLSMKGVDLVRKTACEFVKGVTRDVLSLLFEDREVSEAAVRLSRLSLDEVKKYGVPRGFWRILRRLVQARDDLYLHRVRVEDLVLSSVLSKDISLYRQSNLPHIAVIKRLAARSEELPSVGDRVFYVLTAPGVRTAPQGSSDNGDSVTAGVVSRSDAIDGTDDDADGGGVEESNRRGGEPAKKRARKPPSAVCNYEVAEDPSYVREHGVPIHADKYFEQVLKAVTNVLSPVFPGGETARKDKFLHMVLPRRLHLEPAFLPYSVKAHECC.

4 disordered regions span residues 14-38, 644-665, 877-898, and 1108-1163; these read GAVA…RPPQ, LQSA…SSSS, EGDS…GGSN, and TAPQ…KPPS. Over residues 653–665 the composition is skewed to low complexity; it reads GVSPGSGSNSSSS. Over residues 1110-1119 the composition is skewed to polar residues; that stretch reads PQGSSDNGDS. Residues 1145-1155 show a composition bias toward basic and acidic residues; that stretch reads ESNRRGGEPAK.

This sequence belongs to the DNA polymerase type-B family. In terms of assembly, forms a complex with the ssDNA-binding protein UL57, the DNA polymerase processivity factor UL44, and the alkaline exonuclease UL98. Interacts with the putative helicase-primase complex composed of UL70, UL102 and UL105 proteins; these interactions may coordinate leading and lagging strand DNA synthesis at the replication fork.

The protein resides in the host nucleus. The catalysed reaction is DNA(n) + a 2'-deoxyribonucleoside 5'-triphosphate = DNA(n+1) + diphosphate. In terms of biological role, replicates viral genomic DNA in the late phase of lytic infection, producing long concatemeric DNA. The replication complex is composed of six viral proteins: the DNA polymerase, processivity factor, primase, primase-associated factor, helicase, and ssDNA-binding protein. This chain is DNA polymerase catalytic subunit (UL54), found in Homo sapiens (Human).